The primary structure comprises 469 residues: Uronate isomerase (469 aa).

This sequence belongs to the metallo-dependent hydrolases superfamily. Uronate isomerase family.

The catalysed reaction is D-glucuronate = D-fructuronate. The enzyme catalyses aldehydo-D-galacturonate = keto-D-tagaturonate. It participates in carbohydrate metabolism; pentose and glucuronate interconversion. This is Uronate isomerase from Mesorhizobium japonicum (strain LMG 29417 / CECT 9101 / MAFF 303099) (Mesorhizobium loti (strain MAFF 303099)).